The sequence spans 309 residues: Zinc transporter ZIPB (309 aa).

Topologically, residues 1-22 are periplasmic; the sequence is MNQPSSLAADLRGAWHAQAQSH. The helical transmembrane segment at 23–50 threads the bilayer; it reads PLITLGLAASAAGVVLLLVAGIVNALTG. The Extracellular segment spans residues 51 to 55; that stretch reads ENRVH. The chain crosses the membrane as a helical span at residues 56–81; that stretch reads VGYAVLGGAAGFAATALGALMALGLR. Residues 82-83 lie on the Periplasmic side of the membrane; sequence AI. Residues 84–119 form a helical membrane-spanning segment; that stretch reads SARTQDAMLGFAAGMMLAASAFSLILPGLDAAGTIV. Asp89 is a Zn(2+) binding site. Met99 serves as a coordination point for Cd(2+). Residues 120-121 are Extracellular-facing; that stretch reads GP. A helical membrane pass occupies residues 122 to 145; that stretch reads GPAAAAVVALGLGLGVLLMLGLDY. Zn(2+) is bound at residue Asp144. Asp144 contacts Cd(2+). Residues 146-165 lie on the Periplasmic side of the membrane; it reads FTPHEHERTGHQGPEAARVN. The helical transmembrane segment at 166 to 190 threads the bilayer; it reads RVWLFVLTIILHNLPEGMAIGVSFA. Position 177 (His177) interacts with Zn(2+). 3 residues coordinate Cd(2+): His177, Asn178, and Glu181. Residue Glu181 coordinates Zn(2+). Residues 191–192 are Extracellular-facing; sequence TG. A helical membrane pass occupies residues 193–222; the sequence is DLRIGLPLTSAIAIQDVPEGLAVALALRAV. Zn(2+) is bound at residue Gln207. Residues Gln207, Asp208, and Glu211 each contribute to the Cd(2+) site. Residue Glu211 coordinates Zn(2+). The Periplasmic segment spans residues 223–224; the sequence is GL. Residues 225 to 251 traverse the membrane as a helical segment; that stretch reads PIGRAVLVAVASGLMEPLGALVGVGIS. Glu240 is a binding site for Cd(2+). At 252–255 the chain is on the extracellular side; that stretch reads SGFA. Residues 256 to 275 traverse the membrane as a helical segment; it reads LAYPISMGLAAGAMIFVVSH. Zn(2+) contacts are provided by His275, Glu276, and His286. His275 contributes to the Cd(2+) binding site. The Periplasmic segment spans residues 276–287; it reads EVIPETHRNGHE. The chain crosses the membrane as a helical span at residues 288-308; the sequence is TTATVGLMAGFALMMFLDTAL. Position 309 (Gly309) is a topological domain, extracellular.

Belongs to the ZIP transporter (TC 2.A.5) family. In terms of assembly, homodimer. Also exists as a monomer.

It localises to the cell inner membrane. The catalysed reaction is Zn(2+)(in) = Zn(2+)(out). The enzyme catalyses Cd(2+)(in) = Cd(2+)(out). Selective electrodiffusional channel that mediates the uptake of Zn(2+). Exploits in vivo zinc concentration gradients (maintained by cellular zinc homeostasis) to passively move zinc ions into the cytoplasm. ZIPB-mediated zinc flux is dependent upon pH, but independent of the proton motive force. Is also able to import Cd(2+), but is not permeable to Co(2+), Cu(2+), Fe(2+), Mn(2+) and Ni(2+). The chain is Zinc transporter ZIPB from Bordetella bronchiseptica (strain ATCC BAA-588 / NCTC 13252 / RB50) (Alcaligenes bronchisepticus).